The chain runs to 124 residues: Putative iron-sulfur cluster insertion protein ErpA (124 aa).

3 residues coordinate iron-sulfur cluster: Cys49, Cys113, and Cys115.

It belongs to the HesB/IscA family. As to quaternary structure, homodimer. Iron-sulfur cluster serves as cofactor.

In terms of biological role, required for insertion of 4Fe-4S clusters. The polypeptide is Putative iron-sulfur cluster insertion protein ErpA (Acidovorax sp. (strain JS42)).